An 89-amino-acid chain; its full sequence is Small ribosomal subunit protein bS16 (89 aa).

The protein belongs to the bacterial ribosomal protein bS16 family.

This Psychrobacter arcticus (strain DSM 17307 / VKM B-2377 / 273-4) protein is Small ribosomal subunit protein bS16.